Consider the following 255-residue polypeptide: uncharacterized protein (255 aa).

This sequence belongs to the methyltransferase superfamily.

This is an uncharacterized protein from Mycolicibacterium gilvum (strain PYR-GCK) (Mycobacterium gilvum (strain PYR-GCK)).